The primary structure comprises 136 residues: GFGIFVIFMFFSPSCILSQTLQESGPGTVKPSESLRLTCTVSGFELTSYYVYWIRQPPRKTLEWIGVVRTDGSTAIADSLKNRVTITKDNGKKQVYLQMNGMEVKDTAMYYCTSTLAGTAGYFEHWGQGTMVTVTS.

A signal peptide spans Gly1–Ser18. The 110-residue stretch at Gln19 to Gln128 folds into the Ig-like domain.

This Xenopus laevis (African clawed frog) protein is Ig heavy chain V region XIG8.